The sequence spans 214 residues: Cdc42 effector protein 2 (214 aa).

S2 carries the post-translational modification N-acetylserine. The region spanning 30–44 is the CRIB domain; that stretch reads ISPPLGDFRHTIHIG. Phosphoserine is present on residues S31, S101, S137, S141, and S145. Residues 119-177 are disordered; sequence LTLPTAQAPPKPPRLHLESPQPSPQPSPQGAGNVDVWRIPEAGSPHNGMSPEPEAEEPF.

This sequence belongs to the BORG/CEP family. As to quaternary structure, interacts with CDC42 and RHOQ in a GTP-dependent manner, and with SEPT7.

It is found in the endomembrane system. The protein resides in the cytoplasm. Its subcellular location is the cytoskeleton. Its function is as follows. Probably involved in the organization of the actin cytoskeleton. May act downstream of CDC42 to induce actin filament assembly leading to cell shape changes. Induces pseudopodia formation in fibroblasts in a CDC42-dependent manner. This Mus musculus (Mouse) protein is Cdc42 effector protein 2 (Cdc42ep2).